Consider the following 324-residue polypeptide: Glyoxylate/hydroxypyruvate reductase B (324 aa).

Active-site residues include Arg237 and Glu266. Residue His285 is the Proton donor of the active site.

Belongs to the D-isomer specific 2-hydroxyacid dehydrogenase family. GhrB subfamily. Homodimer.

It is found in the cytoplasm. It catalyses the reaction glycolate + NADP(+) = glyoxylate + NADPH + H(+). The enzyme catalyses (R)-glycerate + NAD(+) = 3-hydroxypyruvate + NADH + H(+). It carries out the reaction (R)-glycerate + NADP(+) = 3-hydroxypyruvate + NADPH + H(+). In terms of biological role, catalyzes the NADPH-dependent reduction of glyoxylate and hydroxypyruvate into glycolate and glycerate, respectively. The chain is Glyoxylate/hydroxypyruvate reductase B from Salmonella gallinarum (strain 287/91 / NCTC 13346).